A 340-amino-acid chain; its full sequence is Mitochondrial calcium uniporter regulator 1 (340 aa).

A disordered region spans residues 1 to 44; it reads MDSGSVAAERPRRTPSRQRLPSSGCGVPARPGVSTLPGGRSWLR. Topologically, residues 1 to 54 are mitochondrial intermembrane; sequence MDSGSVAAERPRRTPSRQRLPSSGCGVPARPGVSTLPGGRSWLRPRGRAARASP. Residues 55–74 traverse the membrane as a helical segment; the sequence is LLFLLLVPSPRLAATATATA. The Mitochondrial matrix segment spans residues 75–316; it reads PRRTLAERSR…KTMLEAHKLD (242 aa). Residues 197 to 291 are a coiled coil; the sequence is ALQQVLSKIA…VSLHAQQDRA (95 aa). Lysine 204 is subject to N6-acetyllysine. Residues 317–339 form a helical membrane-spanning segment; sequence TIKYLAGSVFTCLTVALGFYRLW. Isoleucine 340 is a topological domain (mitochondrial intermembrane).

This sequence belongs to the CCDC90 family. As to quaternary structure, interacts (via coiled coil regions) with MCU; the interaction is direct. Interacts with SMDT1/EMRE; the interaction is direct. Interacts with PPIF.

It localises to the mitochondrion inner membrane. Key regulator of mitochondrial calcium uniporter (MCU) required for calcium entry into mitochondrion. Plays a direct role in uniporter-mediated calcium uptake via a direct interaction with MCU. Probably involved in the assembly of the membrane components of the uniporter complex (uniplex). In Mus musculus (Mouse), this protein is Mitochondrial calcium uniporter regulator 1.